The sequence spans 343 residues: Flavonoid 4'-O-methyltransferase 4 (343 aa).

D211 contacts S-adenosyl-L-methionine. Catalysis depends on H249, which acts as the Proton acceptor.

It belongs to the class I-like SAM-binding methyltransferase superfamily. Cation-independent O-methyltransferase family. Homodimer.

The enzyme catalyses apigenin + S-adenosyl-L-methionine = acacetin + S-adenosyl-L-homocysteine + H(+). The catalysed reaction is kaempferol + S-adenosyl-L-methionine = kaempferide + S-adenosyl-L-homocysteine + H(+). It catalyses the reaction isorhamnetin + S-adenosyl-L-methionine = 3',4'-O-dimethylquercetin + S-adenosyl-L-homocysteine + 2 H(+). It carries out the reaction scutellarein + S-adenosyl-L-methionine = scutellarein 4'-methyl ether + S-adenosyl-L-homocysteine + H(+). The enzyme catalyses (2S)-naringenin + S-adenosyl-L-methionine = (2S)-naringenin 4'-methyl ether + S-adenosyl-L-homocysteine + H(+). The catalysed reaction is 4',7,8-trihydroxyflavone + S-adenosyl-L-methionine = 7,8-dihydroxy-4'-methoxyflavone + S-adenosyl-L-homocysteine + H(+). It catalyses the reaction taxifolin + S-adenosyl-L-methionine = taxifolin 4'-methyl ether + S-adenosyl-L-homocysteine + H(+). It functions in the pathway flavonoid metabolism. Functionally, flavonoid 4'-O-methyltransferase involved in the biosynthesis of polymethoxylated flavonoids natural products such as pebrellin, aroma compounds which contribute to the flavor of peppermint, and exhibit pharmacological activities such as anti-allergic, anti-oxidant, antibacterial, anti-proliferative, and anti-inflammatory effects. Catalyzes S-adenosylmethionine-dependent regioselective 4'-O-methylation of flavonoids; active on various hydroxylated flavonoid substrates, including isorhamnetin, kaempferol, apigenin (API), scutellarein (6-hydroxy-apigenin, 6-OH-API, SCU), taxifolin, 7,8,4'-trihydroxy-flavone and naringenin (NAR), and, with a lower efficiency, quercetin, rhamnetin, luteolin (LUT) and 7,8,3',4'-tetrahydroxy-flavone. This chain is Flavonoid 4'-O-methyltransferase 4, found in Mentha piperita (Peppermint).